The chain runs to 243 residues: 2-C-methyl-D-erythritol 4-phosphate cytidylyltransferase (243 aa).

It belongs to the IspD/TarI cytidylyltransferase family. IspD subfamily. As to quaternary structure, homodimer.

It catalyses the reaction 2-C-methyl-D-erythritol 4-phosphate + CTP + H(+) = 4-CDP-2-C-methyl-D-erythritol + diphosphate. It functions in the pathway isoprenoid biosynthesis; isopentenyl diphosphate biosynthesis via DXP pathway; isopentenyl diphosphate from 1-deoxy-D-xylulose 5-phosphate: step 2/6. Functionally, catalyzes the formation of 4-diphosphocytidyl-2-C-methyl-D-erythritol from CTP and 2-C-methyl-D-erythritol 4-phosphate (MEP). This chain is 2-C-methyl-D-erythritol 4-phosphate cytidylyltransferase, found in Photorhabdus laumondii subsp. laumondii (strain DSM 15139 / CIP 105565 / TT01) (Photorhabdus luminescens subsp. laumondii).